A 358-amino-acid chain; its full sequence is Probable anti-sigma-M factor YhdL (358 aa).

Residues 74–96 (ISVLAVISTLMILPLCTLGSYLY) form a helical membrane-spanning segment.

The N-terminus of YhdL interacts with sigma-M. YhdL interacts specifically with YhdK.

The protein localises to the membrane. This chain is Probable anti-sigma-M factor YhdL (yhdL), found in Bacillus subtilis (strain 168).